Consider the following 184-residue polypeptide: Large ribosomal subunit protein uL6 (184 aa).

Belongs to the universal ribosomal protein uL6 family. As to quaternary structure, part of the 50S ribosomal subunit.

In terms of biological role, this protein binds to the 23S rRNA, and is important in its secondary structure. It is located near the subunit interface in the base of the L7/L12 stalk, and near the tRNA binding site of the peptidyltransferase center. The polypeptide is Large ribosomal subunit protein uL6 (Amoebophilus asiaticus (strain 5a2)).